Here is a 1091-residue protein sequence, read N- to C-terminus: Constitutive coactivator of PPAR-gamma-like protein 2 (1091 aa).

Residues 35 to 53 (QQQHLHRQLPPAALAPGAP) are compositionally biased toward low complexity. Disordered stretches follow at residues 35-105 (QQQH…HPPP), 503-575 (NCLT…SEPH), 966-1010 (SRSS…QGSS), and 1037-1077 (VEEK…KNHV). Arg-57 carries the post-translational modification Omega-N-methylarginine. The segment covering 82 to 95 (SRHHHPAHHFHHHG) has biased composition (basic residues). Over residues 532-544 (GSEQITEAVQQQP) the composition is skewed to polar residues. Positions 966–976 (SRSSRSRGSFG) are enriched in low complexity. Position 972 is an omega-N-methylarginine (Arg-972). Over residues 1062–1077 (SDDHCLPVKNGEKNHV) the composition is skewed to basic and acidic residues.

Belongs to the constitutive coactivator of PPAR-gamma family.

This chain is Constitutive coactivator of PPAR-gamma-like protein 2 (Fam120c), found in Mus musculus (Mouse).